Here is a 690-residue protein sequence, read N- to C-terminus: Glycine--tRNA ligase beta subunit (690 aa).

Belongs to the class-II aminoacyl-tRNA synthetase family. Tetramer of two alpha and two beta subunits.

The protein resides in the cytoplasm. It carries out the reaction tRNA(Gly) + glycine + ATP = glycyl-tRNA(Gly) + AMP + diphosphate. The protein is Glycine--tRNA ligase beta subunit of Pediococcus pentosaceus (strain ATCC 25745 / CCUG 21536 / LMG 10740 / 183-1w).